We begin with the raw amino-acid sequence, 628 residues long: MSDWSLDQARKTYSIPHWADGYFDVNAAGHVVVTPTADGPAVSLPEVVDAARAAGAKLPLLVRFPDILGQRLGKLQAAFAQAQSEWDYAGGYTAVYPIKVNQHRGVAGTLASHHGEGFGLEAGSKPELMAVLALSRPGGLIVCNGYKDREYIRLALIGRKLGLQTFIVIEKPSELTLVLEEARALDVKPGLGVRMRLASLGAGKWQNSGGDKAKFGLSPRQVLDLWKTLRDTEYADSLNLLHFHMGSQISNVRDIANGMREATRYFVELSRLGAKISHVDVGGGLGIDYEGTRSRSYCSINYGLHSYASNIVQPLASACEEHGLTPPRIVTECGRAMTAHHAVLIANVSEVEQAPEGRVPDAHDDEPAAIRHLREIHDELDVRPAVELFQEAQHFHAEGLSAYALGQIDLTHRARIDDLFYAIAHGVRARLSFDEKSHRPVLDELNERLVDKYFVNFSVFESIPDVWAIDQVFPIVPIERLNEAPQRRGIIADMTCDSDGMVKTYVENESLDSSLPLHRLNAGESYRIGFFLVGAYQEILGDIHNLFGDTDAVEVVVDRDGYRIAQQRRGDTTDVMLDYVGYQLDTLRATYAERIAAAHLSPERAQELSAALEAGLTGYTYLSDEPLG.

Lys99 is modified (N6-(pyridoxal phosphate)lysine). Residue 279–289 (VDVGGGLGIDY) participates in substrate binding.

This sequence belongs to the Orn/Lys/Arg decarboxylase class-II family. SpeA subfamily. It depends on Mg(2+) as a cofactor. Pyridoxal 5'-phosphate serves as cofactor.

The enzyme catalyses L-arginine + H(+) = agmatine + CO2. Functionally, catalyzes the biosynthesis of agmatine from arginine. In Xanthomonas axonopodis pv. citri (strain 306), this protein is Biosynthetic arginine decarboxylase.